The sequence spans 166 residues: Protein SprT (166 aa).

The SprT-like domain maps to 20-164 (EHLANANRKL…CVRCGDLLVA (145 aa)). Residue histidine 78 participates in Zn(2+) binding. Glutamate 79 is a catalytic residue. Histidine 82 provides a ligand contact to Zn(2+).

It belongs to the SprT family. Zn(2+) is required as a cofactor.

It is found in the cytoplasm. This Klebsiella pneumoniae subsp. pneumoniae (strain ATCC 700721 / MGH 78578) protein is Protein SprT.